A 466-amino-acid polypeptide reads, in one-letter code: Coproporphyrinogen III oxidase (466 aa).

Residues 9-14, 34-35, Lys-42, 56-59, Val-254, and 446-448 contribute to the FAD site; these read GAGITG, EA, GPES, and VGL.

The protein belongs to the protoporphyrinogen/coproporphyrinogen oxidase family. Coproporphyrinogen III oxidase subfamily. Requires FAD as cofactor.

The protein resides in the cytoplasm. It carries out the reaction coproporphyrinogen III + 3 O2 = coproporphyrin III + 3 H2O2. It functions in the pathway porphyrin-containing compound metabolism; protoheme biosynthesis. The generation of protoporphyrin IX, but not coproporphyrin III, is stimulated by heme-bound HemQ. This stimulatory effect is mediated by superoxide. Inhibited by acifluorfen analogs. Its function is as follows. Involved in coproporphyrin-dependent heme b biosynthesis. Catalyzes the oxidation of coproporphyrinogen III to coproporphyrin III. Can also oxidize protoporphyrinogen IX. The polypeptide is Coproporphyrinogen III oxidase (Staphylococcus aureus (strain NCTC 8325 / PS 47)).